Consider the following 1040-residue polypeptide: Multidrug resistance protein MdtB (1040 aa).

The next 12 membrane-spanning stretches (helical) occupy residues 16–36 (FIMR…AGII), 347–367 (LMMA…NIPA), 369–389 (IIPG…MVFL), 396–416 (LTLM…IVVI), 440–460 (IGFT…PLLF), 472–492 (FAIT…TLTP), 537–557 (WLTL…WVFI), 863–883 (LGST…VLGI), 888–908 (FIHP…ALLA), 911–931 (IAGS…IGIV), 968–988 (ILMT…STGV), and 998–1018 (IGMV…TPVI).

The protein belongs to the resistance-nodulation-cell division (RND) (TC 2.A.6) family. MdtB subfamily. In terms of assembly, part of a tripartite efflux system composed of MdtA, MdtB and MdtC. MdtB forms a heteromultimer with MdtC.

The protein resides in the cell inner membrane. The MdtABC tripartite complex confers resistance against novobiocin and deoxycholate. The sequence is that of Multidrug resistance protein MdtB from Escherichia coli (strain SE11).